The primary structure comprises 659 residues: Exoribonuclease 2 (659 aa).

One can recognise an RNB domain in the interval 189-531; that stretch reads RENLTALHFV…NHRLIKAVLA (343 aa). Residues 576 to 658 form the S1 motif domain; sequence NVEFNAEVQD…ATRSIVGEIL (83 aa).

It belongs to the RNR ribonuclease family. RNase II subfamily.

It localises to the cytoplasm. It catalyses the reaction Exonucleolytic cleavage in the 3'- to 5'-direction to yield nucleoside 5'-phosphates.. Its function is as follows. Involved in mRNA degradation. Hydrolyzes single-stranded polyribonucleotides processively in the 3' to 5' direction. This is Exoribonuclease 2 from Haemophilus influenzae (strain 86-028NP).